The sequence spans 218 residues: Adenylate kinase (218 aa).

10–15 (GAGKGT) lines the ATP pocket. Residues 30-59 (STGDMLRAAVKAGTPLGQQAKAVMDAGQLV) are NMP. AMP is bound by residues threonine 31, arginine 36, 57 to 59 (QLV), 85 to 88 (GFPR), and glutamine 92. The tract at residues 122–159 (GRRSHPASGRTYHVKFNPPKVEGQDDVTGEPLVQREDD) is LID. ATP is bound by residues arginine 123 and 132–133 (TY). The tract at residues 127 to 151 (PASGRTYHVKFNPPKVEGQDDVTGE) is disordered. Residues arginine 156 and arginine 167 each contribute to the AMP site. Glycine 203 is a binding site for ATP.

Belongs to the adenylate kinase family. As to quaternary structure, monomer.

The protein localises to the cytoplasm. The catalysed reaction is AMP + ATP = 2 ADP. It functions in the pathway purine metabolism; AMP biosynthesis via salvage pathway; AMP from ADP: step 1/1. Functionally, catalyzes the reversible transfer of the terminal phosphate group between ATP and AMP. Plays an important role in cellular energy homeostasis and in adenine nucleotide metabolism. The protein is Adenylate kinase of Delftia acidovorans (strain DSM 14801 / SPH-1).